A 348-amino-acid chain; its full sequence is D-alanine--D-alanine ligase (348 aa).

One can recognise an ATP-grasp domain in the interval 132–334 (KRVLESIGIP…YPDLIEELVT (203 aa)). 162-217 (LARLTFPIFVKPANMGSSVGISKAQTKVELRKAIQLALTYDSRVLIEQGVVAREIE) contacts ATP. Mg(2+) contacts are provided by aspartate 288, glutamate 301, and asparagine 303.

The protein belongs to the D-alanine--D-alanine ligase family. Mg(2+) serves as cofactor. Mn(2+) is required as a cofactor.

The protein localises to the cytoplasm. It carries out the reaction 2 D-alanine + ATP = D-alanyl-D-alanine + ADP + phosphate + H(+). Its pathway is cell wall biogenesis; peptidoglycan biosynthesis. Its function is as follows. Cell wall formation. In Streptococcus pyogenes serotype M12 (strain MGAS2096), this protein is D-alanine--D-alanine ligase.